We begin with the raw amino-acid sequence, 732 residues long: E3 ubiquitin-protein ligase RNF19B (732 aa).

Residues 1-109 (MGSEKDSESP…PEEDEAAEGG (109 aa)) are disordered. Residues 1-315 (MGSEKDSESP…VCGCEFCWLC (315 aa)) form a required for ubiquitin ligase activity and for protection against staurosporin-induced cell death region. A compositionally biased stretch (pro residues) spans 54-71 (AEPPPPAAPPPPPPPAPA). The segment covering 72-99 (PVEAQAPPVEALPSEPAAEAEAEAVAAG) has biased composition (low complexity). Acidic residues predominate over residues 100-109 (PEEDEAAEGG). A TRIAD supradomain region spans residues 112–334 (EEVECPLCLV…LSPSGCTFWG (223 aa)). Positions 116, 119, 139, 142, 203, 208, 225, 230, 235, 238, 243, 248, 284, and 287 each coordinate Zn(2+). Residues 116–165 (CPLCLVRLPPERAPRLLSCPHRSCRDCLRHYLRLEISESRVPISCPECSE) form an RING-type 1 zinc finger. The IBR-type zinc-finger motif lies at 183–248 (HKYEEFMLRR…KQIWHPNQTC (66 aa)). Residues 284 to 315 (CPRCSAYIIKMNDGSCNHMTCAVCGCEFCWLC) form an RING-type 2; atypical zinc finger. Cys299 is a catalytic residue. Residues Cys304, Cys307, Cys312, Cys315, His323, and Cys330 each contribute to the Zn(2+) site. Helical transmembrane passes span 351–371 (LIGA…AMVI) and 412–432 (VIAA…VYGV). Disordered regions lie at residues 598 to 644 (QLVS…QSCE) and 660 to 732 (QPES…YEVE). Residues 674-683 (QSDDVPDITS) are compositionally biased toward acidic residues.

The protein belongs to the RBR family. RNF19 subfamily. Interacts with UBE2L3, UBE2L6 and UCKL1. Expressed specifically in natural killer cells, activated macrophages and cytotoxic T-cells. Present in macrophages (at protein level). Ubiquitously expressed with high expression in testis.

The protein localises to the cytoplasmic granule membrane. It localises to the endoplasmic reticulum membrane. The enzyme catalyses [E2 ubiquitin-conjugating enzyme]-S-ubiquitinyl-L-cysteine + [acceptor protein]-L-lysine = [E2 ubiquitin-conjugating enzyme]-L-cysteine + [acceptor protein]-N(6)-ubiquitinyl-L-lysine.. The protein operates within protein modification; protein ubiquitination. E3 ubiquitin-protein ligase which accepts ubiquitin from E2 ubiquitin-conjugating enzymes UBE2L3 and UBE2L6 in the form of a thioester and then directly transfers the ubiquitin to targeted substrates, such as UCKL1. Involved in the cytolytic activity of natural killer cells and cytotoxic T-cells. Protects against staurosporin-induced cell death. The polypeptide is E3 ubiquitin-protein ligase RNF19B (Rnf19b) (Mus musculus (Mouse)).